Consider the following 109-residue polypeptide: MFGKGGMGNLMKQAQQMQERMQKLQEEIANMEVTGESGAGLVKVTITGSHSVRRVDIDESLMEDDKEMLEDLIAAAFNDAARRVEETQKEKMASVTGGMQLPPGMKMPF.

Disordered regions lie at residues 1 to 22 and 88 to 109; these read MFGK…ERMQ and QKEK…KMPF.

This sequence belongs to the YbaB/EbfC family. In terms of assembly, homodimer.

The protein localises to the cytoplasm. It localises to the nucleoid. Binds to DNA and alters its conformation. May be involved in regulation of gene expression, nucleoid organization and DNA protection. The chain is Nucleoid-associated protein VP2178 from Vibrio parahaemolyticus serotype O3:K6 (strain RIMD 2210633).